A 518-amino-acid chain; its full sequence is Calcium/calmodulin-dependent protein kinase kinase cmkC (518 aa).

Residues 1–72 (MANEGAGSLQ…SEYTLSQDDG (72 aa)) are disordered. Composition is skewed to polar residues over residues 8–17 (SLQQDASPGS) and 60–71 (NARSEYTLSQDD). Residues 81-376 (YVIKQEIGRG…MDELREHPWV (296 aa)) form the Protein kinase domain. ATP is bound by residues 87-95 (IGRGSFGAV) and lysine 109. The tract at residues 119–149 (RAKSQLLRQSRGPKRSSRWPKLPFSSPGTGT) is disordered. Residue aspartate 243 is the Proton acceptor of the active site. Positions 404–409 (FSAITK) are autoinhibitory domain. A calmodulin-binding region spans residues 407–431 (ITKNFGHVLAVMKAAKKFKSLQGPT). The interval 453–472 (PTQMDPEESVSLPSPLPYKK) is disordered.

It belongs to the protein kinase superfamily. Ser/Thr protein kinase family.

It catalyses the reaction L-seryl-[protein] + ATP = O-phospho-L-seryl-[protein] + ADP + H(+). The catalysed reaction is L-threonyl-[protein] + ATP = O-phospho-L-threonyl-[protein] + ADP + H(+). With respect to regulation, activated by Ca(2+)/calmodulin. Binding of calmodulin may relieve intrasteric autoinhibition. In terms of biological role, calcium/calmodulin-dependent protein kinase that operates in the calcium-triggered CaMKK-CaMK1 signaling cascade. Phosphorylates and activates cmkB in vitro. Required in G1-phase of the cell cycle for proper timing of the initial nuclear division after germination as well as for subsequent nuclear division cycles. Required for the normal temporal regulation of nimX activity. The protein is Calcium/calmodulin-dependent protein kinase kinase cmkC of Emericella nidulans (Aspergillus nidulans).